Reading from the N-terminus, the 370-residue chain is MPPKRRLVDDADAMEDQDLYEPPASLPKLPGKFLQYTVGGSDPHPGIGHEKDIRQNAVALLDQSRRDMFHTVTPSLVFLCLLIPGLHAAFVHGGVPRESYLSTPVTRGEQTVVKTAKFYGEKTTQRDLTELEISSIFSHCCSLLIGVVIGSSSKIKAGAEQIKKRFKTMMAALNRPSHGETATLLQMFNPHEAIDWINGQPWVGSFVLSLLTTDFESPGKEFMDQIKLVASYAQMTTYTTIKEYLAECMDATLTIPVVAYEIRDFLEVSAKLKEDHADLFPFLGAIRHPDAIKLAPRSFPNLASAAFYWSKKENPTMAGYRASTIQPGASVKETQLARYRRREISRGEDGAELSGEISAIMKMIGVTGLN.

The disordered stretch occupies residues 1-25 (MPPKRRLVDDADAMEDQDLYEPPAS). The short motif at 3–11 (PKRRLVDDA) is the Nuclear localization signal element. A compositionally biased stretch (acidic residues) spans 10–19 (DADAMEDQDL). The Nuclear export signal motif lies at 128–141 (LTELEISSIFSHCC).

As to quaternary structure, homomultimerizes to form the nucleocapsid. Binds to viral genomic RNA. Interacts with phosphoprotein P. Interacts with host CDK1; this interaction delays host cell cycle in late G2. Interacts with host NFKB1.

Its subcellular location is the virion. The protein localises to the host nucleus. The protein resides in the host cytoplasm. In terms of biological role, encapsidates the genome, protecting it from nucleases. The encapsidated genomic RNA is termed the NC and serves as template for transcription and replication. Plays a critical role in the nucleocytoplasmic transport of viral RNP by interaction with other viral proteins. The nuclear export signal is masked by the interaction with the phosphoprotein P. Delays the host cell cycle progression by interacting with the host CDK1-cyclin B1 phase in late G2. Inhibits host NF-kappaB activation. The sequence is that of Nucleoprotein (N) from Borna disease virus (strain V) (BDV).